We begin with the raw amino-acid sequence, 2892 residues long: Inositol 1,4,5-trisphosphate receptor itr-1 (2892 aa).

Topologically, residues 1 to 2475 (MNPSYGRVRK…YPLPEHSNSS (2475 aa)) are cytoplasmic. MIR domains follow at residues 192 to 246 (GNVI…IEPA), 319 to 379 (QNSV…VQVV), 386 to 466 (GGTA…LGPT), and 490 to 551 (NKEV…LLPV). A 1D-myo-inositol 1,4,5-trisphosphate-binding site is contributed by 357 to 361 (RMTNR). Residues 625-628 (KLLR) and 689-691 (YRK) each bind 1D-myo-inositol 1,4,5-trisphosphate. Residues 1030–1056 (MMRGGNKENSKDLAKTPSVTAEEAGRT) are disordered. Residues 1034-1043 (GNKENSKDLA) show a composition bias toward basic and acidic residues. A helical membrane pass occupies residues 2476-2496 (ISLGNLYSWFAVFSSFLLAHY). At 2497–2514 (LRHDKIYLHKTSLLILAS) the chain is on the extracellular side. A helical transmembrane segment spans residues 2515–2535 (LCFLLLSSIGVTLTLYIFGIL). The Cytoplasmic segment spans residues 2536–2572 (QLVNKIVHVVAFVSNKGLEDRPIAEILACRNLHYLLV). Residues 2573–2593 (YLFICILGLLVHPMIYCILLF) form a helical membrane-spanning segment. The Extracellular portion of the chain corresponds to 2594 to 2615 (DIIFTEETLQNVIASVTRNYQS). The helical transmembrane segment at 2616 to 2636 (IVWTGLLALILLYFFSILGFL) threads the bilayer. Topologically, residues 2637-2735 (YFRHDFYLEV…FIWRVAYDMT (99 aa)) are cytoplasmic. Residues 2655-2666 (ATISSGIPSETC) are compositionally biased toward polar residues. A disordered region spans residues 2655 to 2685 (ATISSGIPSETCPSEGCPGLQPSEKDDNDDE). A helical membrane pass occupies residues 2736–2756 (FFVVLIVIVLNLIFGVIIDTF). Residues 2757–2892 (GDLRAEKNEK…RAFMEQFQPR (136 aa)) are Extracellular-facing.

This sequence belongs to the InsP3 receptor family. As to quaternary structure, interacts with myo-1, myo-2, unc-54/myo-4 and nmy-2. Also interacts with iri-1. As to expression, isoform a is expressed in the anterior cells of the pharyngeal terminal bulb, vulva, rectal epithelial cells, spicule protractor muscles of the proctodeum and male-specific neuron CP8 or CP9. Isoform d is expressed in the spermatheca, excretory cell, amphid socket cells, PDA motor neuron, spicule retractor muscles, gubernaculum retractor muscles, posterior oblique muscles, diagonal muscles and the vas deferens. Also expressed in the intestine, pharynx, pharyngeal isthmus, pharyngeal intestinal valve, somatic gonad, hypodermal cells of the vulva, uterine sheath cells, tail, head, LUA motor neuron and the embryonic epidermis (at protein level).

The protein resides in the endoplasmic reticulum membrane. Receptor for inositol 1,4,5-trisphosphate, a second messenger that regulates intracellular calcium homeostasis. Binds in vitro to both inositol 1,4,5-trisphosphate (1,4,5-InsP3) and inositol 2,4,5-trisphosphate (2,4,5-InsP3) with high affinity and does not discriminate between the phosphate at 1 or 2 position. Can also bind inositol 1,3,4,5-tetrakisphosphate (1,3,4,5-InsP4) and inositol 4,5-bisphosphate (4,5-InsP2), but with lower affinity. Acts as a timekeeper/rhythm generator via calcium signaling, affecting the defecation cycle and pharyngeal pumping. Affects normal hermaphrodite and male fertility as a participant in intracellular signaling by acting downstream of let-23/lin-3 which regulates ovulation, spermathecal valve dilation and male mating behavior. Important for early embryonic development; controls epidermal cell migration and may also regulate filopodial protrusive activity during epithelial morphogenesis. Component of inositol trisphosphate (IP3)-mediated downstream signaling pathways that controls amphid sensory neuronal (ASH)-mediated response to nose touch and benzaldehyde but not other ASH-mediated responses. Involved in modulating lifespan, acting downstream of transcription factor atf-6. This chain is Inositol 1,4,5-trisphosphate receptor itr-1, found in Caenorhabditis elegans.